The following is a 129-amino-acid chain: Small ribosomal subunit protein uS9 (129 aa).

Positions 107–129 are disordered; sequence SRTVERKKYGRRKARRSPQFSKR. Residues 114–129 are compositionally biased toward basic residues; it reads KYGRRKARRSPQFSKR.

It belongs to the universal ribosomal protein uS9 family.

The chain is Small ribosomal subunit protein uS9 from Campylobacter jejuni subsp. jejuni serotype O:23/36 (strain 81-176).